We begin with the raw amino-acid sequence, 434 residues long: Glutamate-1-semialdehyde 2,1-aminomutase (434 aa).

Lys274 is modified (N6-(pyridoxal phosphate)lysine).

Belongs to the class-III pyridoxal-phosphate-dependent aminotransferase family. HemL subfamily. In terms of assembly, homodimer. Pyridoxal 5'-phosphate serves as cofactor.

The protein resides in the cytoplasm. It catalyses the reaction (S)-4-amino-5-oxopentanoate = 5-aminolevulinate. It functions in the pathway porphyrin-containing compound metabolism; protoporphyrin-IX biosynthesis; 5-aminolevulinate from L-glutamyl-tRNA(Glu): step 2/2. In Acidovorax ebreus (strain TPSY) (Diaphorobacter sp. (strain TPSY)), this protein is Glutamate-1-semialdehyde 2,1-aminomutase.